A 749-amino-acid polypeptide reads, in one-letter code: 5-methyltetrahydropteroyltriglutamate--homocysteine methyltransferase (749 aa).

5-methyltetrahydropteroyltri-L-glutamate-binding positions include 15 to 18 (RELK) and lysine 114. L-homocysteine is bound by residues 425 to 427 (IGS) and glutamate 478. Residues 425-427 (IGS) and glutamate 478 contribute to the L-methionine site. Tryptophan 555 lines the 5-methyltetrahydropteroyltri-L-glutamate pocket. L-homocysteine is bound at residue aspartate 593. Position 593 (aspartate 593) interacts with L-methionine. Glutamate 599 serves as a coordination point for 5-methyltetrahydropteroyltri-L-glutamate. The Zn(2+) site is built by histidine 636, cysteine 638, and glutamate 660. Residue histidine 689 is the Proton donor of the active site. Cysteine 721 is a binding site for Zn(2+).

It belongs to the vitamin-B12 independent methionine synthase family. The cofactor is Zn(2+).

The enzyme catalyses 5-methyltetrahydropteroyltri-L-glutamate + L-homocysteine = tetrahydropteroyltri-L-glutamate + L-methionine. It participates in amino-acid biosynthesis; L-methionine biosynthesis via de novo pathway; L-methionine from L-homocysteine (MetE route): step 1/1. Its function is as follows. Catalyzes the transfer of a methyl group from 5-methyltetrahydrofolate to homocysteine resulting in methionine formation. This Streptococcus pneumoniae serotype 2 (strain D39 / NCTC 7466) protein is 5-methyltetrahydropteroyltriglutamate--homocysteine methyltransferase.